We begin with the raw amino-acid sequence, 163 residues long: Disulfide bond formation protein B 1 (163 aa).

At 1-9 the chain is on the cytoplasmic side; sequence MPLASPRQL. Residues 10 to 26 traverse the membrane as a helical segment; that stretch reads FLLAFLACVAIMGGALY. The Periplasmic portion of the chain corresponds to 27 to 44; that stretch reads LEHVVGLEACPLCVVQRI. C36 and C39 are joined by a disulfide. The helical transmembrane segment at 45–61 threads the bilayer; that stretch reads FFILIGLTCLAGAIQGP. Residues 62-67 lie on the Cytoplasmic side of the membrane; sequence GLRGRR. Residues 68–85 traverse the membrane as a helical segment; sequence IYSVLVFLLALGGGATAA. At 86–142 the chain is on the periplasmic side; sequence RQVWLQTVPLDQLPACLPSLDYMMQALPFQEVIRLVLHGTADCAQVSWTLFTLSIPE. Cysteines 101 and 128 form a disulfide. Residues 143–161 form a helical membrane-spanning segment; that stretch reads WSLLAFVAYLGFSIVQFLR. Over 162 to 163 the chain is Cytoplasmic; it reads RA.

This sequence belongs to the DsbB family.

The protein resides in the cell inner membrane. Required for disulfide bond formation in some periplasmic proteins. Acts by oxidizing the DsbA protein. The chain is Disulfide bond formation protein B 1 (dsbB1) from Pseudomonas aeruginosa (strain ATCC 15692 / DSM 22644 / CIP 104116 / JCM 14847 / LMG 12228 / 1C / PRS 101 / PAO1).